The primary structure comprises 341 residues: Adhesion protein Bd37 (341 aa).

The signal sequence occupies residues 1-21 (MKTSKILNTAAICLLAMGFNG). N-linked (GlcNAc...) asparagine glycans are attached at residues asparagine 23 and asparagine 30. Cysteine 26 and cysteine 307 are oxidised to a cystine. Residues 36-75 (AAANPVVSTPGNDAQQAGTQQGGANSKSVPEQQPQQAAGE) form a disordered region. Positions 49–59 (AQQAGTQQGGA) are enriched in low complexity. Positions 60 to 75 (NSKSVPEQQPQQAAGE) are enriched in polar residues. Serine 311 carries the GPI-anchor amidated serine lipid modification. A propeptide spans 312–341 (GQGSSPKKPSFAAVPSSLSAIVFGIIVSMF) (removed in mature form).

Post-translationally, the signal sequence is cleaved. In terms of processing, glycosylated. Palmitoylated. Post-translationally, not myristoylated.

The protein localises to the cell membrane. Its subcellular location is the secreted. It localises to the vesicle. In terms of biological role, binds to host erythrocytes. The chain is Adhesion protein Bd37 from Babesia divergens.